A 467-amino-acid polypeptide reads, in one-letter code: 3-isopropylmalate dehydratase large subunit (467 aa).

C347, C407, and C410 together coordinate [4Fe-4S] cluster. Polar residues predominate over residues 422 to 442 (QISASSSNRNFKGRQGSSSGR). The tract at residues 422-443 (QISASSSNRNFKGRQGSSSGRT) is disordered.

Belongs to the aconitase/IPM isomerase family. LeuC type 1 subfamily. As to quaternary structure, heterodimer of LeuC and LeuD. Requires [4Fe-4S] cluster as cofactor.

The catalysed reaction is (2R,3S)-3-isopropylmalate = (2S)-2-isopropylmalate. The protein operates within amino-acid biosynthesis; L-leucine biosynthesis; L-leucine from 3-methyl-2-oxobutanoate: step 2/4. In terms of biological role, catalyzes the isomerization between 2-isopropylmalate and 3-isopropylmalate, via the formation of 2-isopropylmaleate. The chain is 3-isopropylmalate dehydratase large subunit from Nostoc punctiforme (strain ATCC 29133 / PCC 73102).